Reading from the N-terminus, the 509-residue chain is Probable xyloglucan galactosyltransferase GT12 (509 aa).

Over 1-3 (MMK) the chain is Cytoplasmic. The chain crosses the membrane as a helical; Signal-anchor for type II membrane protein span at residues 4–24 (PVPKLWVVISSAFVFCLLVLF). At 25-509 (QINKSDLIEA…KLEIIHEKTA (485 aa)) the chain is on the lumenal side. 8 N-linked (GlcNAc...) asparagine glycosylation sites follow: Asn-27, Asn-59, Asn-65, Asn-169, Asn-170, Asn-195, Asn-257, and Asn-416.

This sequence belongs to the glycosyltransferase 47 family. In terms of tissue distribution, expressed in pollen grains.

The protein localises to the golgi apparatus membrane. In terms of biological role, functions in xyloglucan synthesis by adding side chains to the xylosylated glucan backbone. Involved in the galactosylation of hemicellulose xyloglucan. The chain is Probable xyloglucan galactosyltransferase GT12 from Arabidopsis thaliana (Mouse-ear cress).